Here is a 272-residue protein sequence, read N- to C-terminus: Glutamate racemase (272 aa).

Residues 10–11 (DS) and 42–43 (YG) contribute to the substrate site. Cys73 (proton donor/acceptor) is an active-site residue. 74-75 (NT) is a substrate binding site. Cys183 serves as the catalytic Proton donor/acceptor. Substrate is bound at residue 184 to 185 (TH).

Belongs to the aspartate/glutamate racemases family.

It catalyses the reaction L-glutamate = D-glutamate. It participates in cell wall biogenesis; peptidoglycan biosynthesis. Provides the (R)-glutamate required for cell wall biosynthesis. The polypeptide is Glutamate racemase (Leifsonia xyli subsp. xyli (strain CTCB07)).